A 398-amino-acid polypeptide reads, in one-letter code: Subtilisin-like serine protease EN45_076310 (398 aa).

The N-terminal stretch at 1–19 is a signal peptide; sequence MGFLKLLSTSLATLAVVNA. A propeptide spans 20-115 (removed in mature form); the sequence is GKLLTANDGD…VEPDMVVNAT (96 aa). The region spanning 35–113 is the Inhibitor I9 domain; it reads SYIVVMNDGV…KYVEPDMVVN (79 aa). Asn113 carries N-linked (GlcNAc...) asparagine glycosylation. The tract at residues 124 to 134 is igE-binding; the sequence is PSWGLSRISSK. The Peptidase S8 domain maps to 125-398; that stretch reads SWGLSRISSK…KLLYNGINAQ (274 aa). Asp157 serves as the catalytic Charge relay system. Positions 163–170 are igE-binding; that stretch reads GHADFGGR. Positions 175–195 are disordered; sequence TNTADNDDTDGNGHGTHTAST. Residue His188 is the Charge relay system of the active site. The igE-binding stretch occupies residues 227 to 245; that stretch reads IAGMDWAVKDSKSRGATGK. Residue Asn249 is glycosylated (N-linked (GlcNAc...) asparagine). The segment at 310-318 is igE-binding; sequence SFTNFGSVV. Ser343 (charge relay system) is an active-site residue.

This sequence belongs to the peptidase S8 family.

The protein localises to the secreted. With respect to regulation, inhibited by phenylmethanesulfonyl fluoride (PMSF) and diethyl pyrocarbonate (DEPC), but not by benzamidine. Functionally, serine protease that hydrolyzes casein, gelatin and human collagen type IV, but not elastin in vitro. Hydrolyzes OCLN of the human lung epithelial cells at 202-Gln-|-Ser-203 and Gln-211-|-Ile-212. In Penicillium chrysogenum (Penicillium notatum), this protein is Subtilisin-like serine protease EN45_076310.